The primary structure comprises 297 residues: Phosphoribosylaminoimidazole-succinocarboxamide synthase (297 aa).

This sequence belongs to the SAICAR synthetase family.

The enzyme catalyses 5-amino-1-(5-phospho-D-ribosyl)imidazole-4-carboxylate + L-aspartate + ATP = (2S)-2-[5-amino-1-(5-phospho-beta-D-ribosyl)imidazole-4-carboxamido]succinate + ADP + phosphate + 2 H(+). Its pathway is purine metabolism; IMP biosynthesis via de novo pathway; 5-amino-1-(5-phospho-D-ribosyl)imidazole-4-carboxamide from 5-amino-1-(5-phospho-D-ribosyl)imidazole-4-carboxylate: step 1/2. In Mycobacterium marinum (strain ATCC BAA-535 / M), this protein is Phosphoribosylaminoimidazole-succinocarboxamide synthase.